Reading from the N-terminus, the 124-residue chain is Protein CYSTEINE-RICH TRANSMEMBRANE MODULE 10 (124 aa).

The tract at residues 1–103 is disordered; the sequence is MSYQDPQHPV…PKNKKDKKDS (103 aa). Pro residues-rich tracts occupy residues 27-40 and 65-88; these read AGYP…PPQY and GYPP…PPPH. A helical membrane pass occupies residues 101-118; the sequence is KDSGGFMEGCLAMLCCCV.

Belongs to the CYSTM1 family. Heterodimers. Interacts with CYSTM7 and WIH1/CYSTM13. In terms of tissue distribution, mostly expressed in stems and,at low levels, in stems, roots, flowers, siliques and leaves.

The protein localises to the cell membrane. It is found in the cytoplasm. In terms of biological role, involved in resistance to abiotic stress. The sequence is that of Protein CYSTEINE-RICH TRANSMEMBRANE MODULE 10 from Arabidopsis thaliana (Mouse-ear cress).